We begin with the raw amino-acid sequence, 164 residues long: Transcription elongation factor GreA (164 aa).

A coiled-coil region spans residues 50–76 (YHAAREEQGQQEARIRQLQELLNNAKV).

The protein belongs to the GreA/GreB family.

Its function is as follows. Necessary for efficient RNA polymerase transcription elongation past template-encoded arresting sites. The arresting sites in DNA have the property of trapping a certain fraction of elongating RNA polymerases that pass through, resulting in locked ternary complexes. Cleavage of the nascent transcript by cleavage factors such as GreA or GreB allows the resumption of elongation from the new 3'terminus. GreA releases sequences of 2 to 3 nucleotides. This chain is Transcription elongation factor GreA, found in Mycobacteroides abscessus (strain ATCC 19977 / DSM 44196 / CCUG 20993 / CIP 104536 / JCM 13569 / NCTC 13031 / TMC 1543 / L948) (Mycobacterium abscessus).